Here is a 702-residue protein sequence, read N- to C-terminus: Elongation factor G (702 aa).

Residues 8 to 290 form the tr-type G domain; the sequence is ARYRNIGISA…AVIEYLPAPT (283 aa). GTP-binding positions include 17–24, 88–92, and 142–145; these read AHIDAGKT, DTPGH, and NKMD.

Belongs to the TRAFAC class translation factor GTPase superfamily. Classic translation factor GTPase family. EF-G/EF-2 subfamily.

Its subcellular location is the cytoplasm. In terms of biological role, catalyzes the GTP-dependent ribosomal translocation step during translation elongation. During this step, the ribosome changes from the pre-translocational (PRE) to the post-translocational (POST) state as the newly formed A-site-bound peptidyl-tRNA and P-site-bound deacylated tRNA move to the P and E sites, respectively. Catalyzes the coordinated movement of the two tRNA molecules, the mRNA and conformational changes in the ribosome. This chain is Elongation factor G, found in Photorhabdus laumondii subsp. laumondii (strain DSM 15139 / CIP 105565 / TT01) (Photorhabdus luminescens subsp. laumondii).